The chain runs to 400 residues: Tryptophan 2,3-dioxygenase (400 aa).

Substrate is bound by residues 75–79 and Arg146; that span reads FIIIH. A heme-binding site is contributed by His332. Residue Thr346 coordinates substrate.

This sequence belongs to the tryptophan 2,3-dioxygenase family. As to quaternary structure, homotetramer. Dimer of dimers. It depends on heme as a cofactor.

It carries out the reaction L-tryptophan + O2 = N-formyl-L-kynurenine. It functions in the pathway amino-acid degradation; L-tryptophan degradation via kynurenine pathway; L-kynurenine from L-tryptophan: step 1/2. Heme-dependent dioxygenase that catalyzes the oxidative cleavage of the L-tryptophan (L-Trp) pyrrole ring and converts L-tryptophan to N-formyl-L-kynurenine. Catalyzes the oxidative cleavage of the indole moiety. The chain is Tryptophan 2,3-dioxygenase from Dictyostelium discoideum (Social amoeba).